A 476-amino-acid polypeptide reads, in one-letter code: Cysteine--tRNA ligase (476 aa).

C30 contributes to the Zn(2+) binding site. Residues 32–42 carry the 'HIGH' region motif; that stretch reads PTVYNYIHIGN. Zn(2+) is bound by residues C215, H240, and E244. Residues 274–278 carry the 'KMSKS' region motif; sequence KMSKS. Position 277 (K277) interacts with ATP.

The protein belongs to the class-I aminoacyl-tRNA synthetase family. Monomer. The cofactor is Zn(2+).

It localises to the cytoplasm. The catalysed reaction is tRNA(Cys) + L-cysteine + ATP = L-cysteinyl-tRNA(Cys) + AMP + diphosphate. In Lactobacillus helveticus (strain DPC 4571), this protein is Cysteine--tRNA ligase.